The following is a 208-amino-acid chain: Large ribosomal subunit protein uL4 (208 aa).

The disordered stretch occupies residues 54 to 78; sequence RAEVSHTTKKPWNQKGTGRARAGMS.

It belongs to the universal ribosomal protein uL4 family. As to quaternary structure, part of the 50S ribosomal subunit.

Its function is as follows. One of the primary rRNA binding proteins, this protein initially binds near the 5'-end of the 23S rRNA. It is important during the early stages of 50S assembly. It makes multiple contacts with different domains of the 23S rRNA in the assembled 50S subunit and ribosome. Functionally, forms part of the polypeptide exit tunnel. This is Large ribosomal subunit protein uL4 from Methylobacillus flagellatus (strain ATCC 51484 / DSM 6875 / VKM B-1610 / KT).